The primary structure comprises 479 residues: Rifampicin monooxygenase (479 aa).

Residues Thr12, Asp31, Lys32, Arg41, Gln98, Val122, Thr156, Asp278, Leu291, and Asn292 each contribute to the FAD site.

Belongs to the rifampicin monooxygenase family. It depends on FAD as a cofactor.

It catalyses the reaction rifampicin + NADPH + O2 = rifampicin para-naphthoquinone carboxamide + NADP(+) + H2O + H(+). The enzyme catalyses rifampicin + NADH + O2 = rifampicin para-naphthoquinone carboxamide + NAD(+) + H2O + H(+). Its function is as follows. Monooxygenase that can modify rifampicin, thereby inactivating its antibiotic activity. The sequence is that of Rifampicin monooxygenase from Rhodococcus hoagii (Corynebacterium equii).